The following is a 109-amino-acid chain: Class I hydrophobin SC1 (109 aa).

Residues 1–22 (MRFSLAILALPVLAAATAVPRG) form the signal peptide. 4 disulfide bridges follow: cysteine 27/cysteine 88, cysteine 34/cysteine 82, cysteine 35/cysteine 69, and cysteine 89/cysteine 102.

The protein belongs to the fungal hydrophobin family. In terms of assembly, self-assembles to form functional amyloid fibrils called rodlets. Self-assembly into fibrillar rodlets occurs spontaneously at hydrophobic:hydrophilic interfaces and the rodlets further associate laterally to form amphipathic monolayers.

It localises to the secreted. The protein resides in the cell wall. Functionally, aerial growth, conidiation, and dispersal of filamentous fungi in the environment rely upon a capability of their secreting small amphipathic proteins called hydrophobins (HPBs) with low sequence identity. Class I can self-assemble into an outermost layer of rodlet bundles on aerial cell surfaces, conferring cellular hydrophobicity that supports fungal growth, development and dispersal; whereas Class II form highly ordered films at water-air interfaces through intermolecular interactions but contribute nothing to the rodlet structure. SC1 is a dikaryon-specific class I hydrophobin that contributes to the formation of aerial hyphae and fruiting bodies. The chain is Class I hydrophobin SC1 from Schizophyllum commune (Split gill fungus).